Reading from the N-terminus, the 188-residue chain is Shikimate kinase (188 aa).

ATP is bound at residue 21–26 (GAGKTT). Residue Thr-25 coordinates Mg(2+). Residues Asp-43, Arg-67, and Gly-90 each coordinate substrate. Arg-130 lines the ATP pocket. Arg-148 provides a ligand contact to substrate.

Belongs to the shikimate kinase family. As to quaternary structure, monomer. Mg(2+) is required as a cofactor.

The protein resides in the cytoplasm. The catalysed reaction is shikimate + ATP = 3-phosphoshikimate + ADP + H(+). It functions in the pathway metabolic intermediate biosynthesis; chorismate biosynthesis; chorismate from D-erythrose 4-phosphate and phosphoenolpyruvate: step 5/7. Functionally, catalyzes the specific phosphorylation of the 3-hydroxyl group of shikimic acid using ATP as a cosubstrate. The protein is Shikimate kinase of Geobacillus thermodenitrificans (strain NG80-2).